The primary structure comprises 308 residues: tRNA-cytidine(32) 2-sulfurtransferase (308 aa).

Positions 39 to 44 (SGGKDS) match the PP-loop motif motif. 3 residues coordinate [4Fe-4S] cluster: Cys-114, Cys-117, and Cys-205.

This sequence belongs to the TtcA family. As to quaternary structure, homodimer. Mg(2+) serves as cofactor. The cofactor is [4Fe-4S] cluster.

It localises to the cytoplasm. The enzyme catalyses cytidine(32) in tRNA + S-sulfanyl-L-cysteinyl-[cysteine desulfurase] + AH2 + ATP = 2-thiocytidine(32) in tRNA + L-cysteinyl-[cysteine desulfurase] + A + AMP + diphosphate + H(+). The protein operates within tRNA modification. Functionally, catalyzes the ATP-dependent 2-thiolation of cytidine in position 32 of tRNA, to form 2-thiocytidine (s(2)C32). The sulfur atoms are provided by the cysteine/cysteine desulfurase (IscS) system. The polypeptide is tRNA-cytidine(32) 2-sulfurtransferase (Cupriavidus taiwanensis (strain DSM 17343 / BCRC 17206 / CCUG 44338 / CIP 107171 / LMG 19424 / R1) (Ralstonia taiwanensis (strain LMG 19424))).